A 207-amino-acid chain; its full sequence is Outer-membrane lipoprotein carrier protein (207 aa).

Residues 1 to 21 (MRLIRMLLLPVLAVTTLSAHA) form the signal peptide.

This sequence belongs to the LolA family. Monomer.

Its subcellular location is the periplasm. Functionally, participates in the translocation of lipoproteins from the inner membrane to the outer membrane. Only forms a complex with a lipoprotein if the residue after the N-terminal Cys is not an aspartate (The Asp acts as a targeting signal to indicate that the lipoprotein should stay in the inner membrane). The chain is Outer-membrane lipoprotein carrier protein from Pseudomonas fluorescens (strain ATCC BAA-477 / NRRL B-23932 / Pf-5).